We begin with the raw amino-acid sequence, 538 residues long: Beta-1,4-mannosyl-glycoprotein 4-beta-N-acetylglucosaminyltransferase (538 aa).

At 1 to 7 the chain is on the cytoplasmic side; that stretch reads MKMRRYK. Residues 8–23 traverse the membrane as a helical; Signal-anchor for type II membrane protein segment; sequence LFLMFCMAGLCLISFL. Residues 24-538 lie on the Lumenal side of the membrane; it reads HFFKTLSYVT…VRGKLDTTEG (515 aa). Residues 121-151 are disordered; that stretch reads GTRMLEKPSPGRTEEKTKVAEGSSVRGPARR. 3 N-linked (GlcNAc...) asparagine glycosylation sites follow: Asn-245, Asn-263, and Asn-401. The interval 509 to 538 is disordered; it reads PKSTVEGGRRNQGSDGRSSAVRGKLDTTEG.

Belongs to the glycosyltransferase 17 family. In terms of assembly, interacts with MGAT4D.

Its subcellular location is the golgi apparatus membrane. The enzyme catalyses N(4)-{beta-D-GlcNAc-(1-&gt;2)-alpha-D-Man-(1-&gt;3)-[beta-D-GlcNAc-(1-&gt;2)-alpha-D-Man-(1-&gt;6)]-beta-D-Man-(1-&gt;4)-beta-D-GlcNAc-(1-&gt;4)-beta-D-GlcNAc}-L-asparaginyl-[protein] + UDP-N-acetyl-alpha-D-glucosamine = N(4)-{beta-D-GlcNAc-(1-&gt;2)-alpha-D-Man-(1-&gt;3)-[beta-D-GlcNAc-(1-&gt;4)]-[beta-D-GlcNAc-(1-&gt;2)-alpha-D-Man-(1-&gt;6)]-beta-D-Man-(1-&gt;4)-beta-D-GlcNAc-(1-&gt;4)-beta-D-GlcNAc}-L-asparaginyl-[protein] + UDP + H(+). Its pathway is protein modification; protein glycosylation. Its function is as follows. It is involved in the regulation of the biosynthesis and biological function of glycoprotein oligosaccharides. Catalyzes the addition of N-acetylglucosamine in beta 1-4 linkage to the beta-linked mannose of the trimannosyl core of N-linked sugar chains, called bisecting N-acetylglucosamine (GlcNAc). It is one of the most important enzymes involved in the regulation of the biosynthesis of glycoprotein oligosaccharides. The addition of this bisecting GlcNAc residue alters not only the composition, but also the conformation of the N-glycan. The introduction of the bisecting GlcNAc residue results in the suppression of further processing and elongation of N-glycans, precluding the formation of beta-1,6 GlcNAc branching, catalyzed by MGAT5 since it is unable to use the bisected oligosaccharide as a substrate. Addition of bisecting N-acetylglucosamine to CDH1/E-cadherin modulates CDH1 cell membrane location. Inhibits NeuAc-alpha-2,3-Gal-beta-1,4-GlcNAc- formation which modulates sialylation levels and plays a role in cell migration regulation. In brain, addition of bisecting N-acetylglucosamine to BACE1 blocks its lysosomal targeting in response to oxidative stress and further degradation which increases its location to early endosome and the APP cleavage. This chain is Beta-1,4-mannosyl-glycoprotein 4-beta-N-acetylglucosaminyltransferase (Mgat3), found in Rattus norvegicus (Rat).